A 545-amino-acid chain; its full sequence is La-related protein 6B (545 aa).

Positions 1–10 (MADQQTLDSS) are enriched in polar residues. Disordered stretches follow at residues 1 to 76 (MADQ…IPPP), 105 to 187 (LVPV…DSKT), and 382 to 545 (HQTK…VQAE). Residues 23 to 49 (SHSTSSTTSASSSSDPSLLRSLSLSRL) are compositionally biased toward low complexity. Pro residues predominate over residues 61–76 (TTPPLPQPPRMIIPPP). Positions 111–126 (HHPHHRFHQHHHHNRH) are enriched in basic residues. A compositionally biased stretch (basic and acidic residues) spans 154–173 (LVSKKNDRRDHSKRESKNDQ). A compositionally biased stretch (polar residues) spans 174 to 185 (VTETGASVSIDS). Residues 187-278 (TGLPEDSIQK…RRISPITESA (92 aa)) enclose the HTH La-type RNA-binding domain. The region spanning 285–383 (RIIVAENLPE…LKVRLMLKHQ (99 aa)) is the RRM domain. The span at 448–464 (GQRKGRNRGRGKGRGRG) shows a compositional bias: basic residues. Residues 465–478 (QPHQNQNQNNNHSH) are compositionally biased toward low complexity. Residues 479–497 (NQNHNHNGRGNHHHHHHHQ) are compositionally biased toward basic residues. Positions 498-509 (VGTQPSNNPMNN) are enriched in polar residues. Residues 510–519 (MEQPGMGKQQ) are compositionally biased toward low complexity.

The protein localises to the nucleus. In terms of biological role, transcriptional regulator. In Arabidopsis thaliana (Mouse-ear cress), this protein is La-related protein 6B (LARP6B).